A 177-amino-acid polypeptide reads, in one-letter code: Large ribosomal subunit protein uL6 (177 aa).

Belongs to the universal ribosomal protein uL6 family. In terms of assembly, part of the 50S ribosomal subunit.

In terms of biological role, this protein binds to the 23S rRNA, and is important in its secondary structure. It is located near the subunit interface in the base of the L7/L12 stalk, and near the tRNA binding site of the peptidyltransferase center. This chain is Large ribosomal subunit protein uL6, found in Vibrio campbellii (strain ATCC BAA-1116).